The primary structure comprises 127 residues: Small ribosomal subunit protein uS13 (127 aa).

A disordered region spans residues 95 to 127 (GLPLRGQRTKTNARTRRGKKGAAIGGKKKATKK).

It belongs to the universal ribosomal protein uS13 family. Part of the 30S ribosomal subunit. Forms a loose heterodimer with protein S19. Forms two bridges to the 50S subunit in the 70S ribosome.

In terms of biological role, located at the top of the head of the 30S subunit, it contacts several helices of the 16S rRNA. In the 70S ribosome it contacts the 23S rRNA (bridge B1a) and protein L5 of the 50S subunit (bridge B1b), connecting the 2 subunits; these bridges are implicated in subunit movement. Contacts the tRNAs in the A and P-sites. The sequence is that of Small ribosomal subunit protein uS13 from Herpetosiphon aurantiacus (strain ATCC 23779 / DSM 785 / 114-95).